Here is a 391-residue protein sequence, read N- to C-terminus: MDFGALPPEINSARMYAGAGAGPMMAAGAAWNGLAAELGTTAASYESVITRLTTESWMGPASMAMVAAAQPYLAWLTYTAEAAAHAGSQAMASAAAYEAAYAMTVPPEVVAANRALLAALVATNVLGINTPAIMATEALYAEMWAQDALAMYGYAAASGAAGMLQPLSPPSQTTNPGGLAAQSAAVGSAAATAAVNQVSVADLISSLPNAVSGLASPVTSVLDSTGLSGIIADIDALLATPFVANIINSAVNTAAWYVNAAIPTAIFLANALNSGAPVAIAEGAIEAAEGAASAAAAGLADSVTPAGLGASLGEATLVGRLSVPAAWSTAAPATTAGATALEGSGWTVAAEEAGPVTGMMPGMASAAKGTGAYAGPRYGFKPTVMPKQVVV.

Residues 312–367 are eukaryotic-like SH3 domain; that stretch reads LGEATLVGRLSVPAAWSTAAPATTAGATALEGSGWTVAAEEAGPVTGMMPGMASAA.

It belongs to the mycobacterial PPE family. In terms of assembly, forms a heterodimer with PE8. The dimer forms a 1:1:1 heterotrimeric complex with EspG5. PPE15 interacts directly with EspG5. Interacts via the C-terminal region with host Toll-like receptor 4 (TLR4). Interacts, also via the C-terminal region, with two cytosolic subunits of the host NOX complex, p47phox (NCF1) and p67phox (NCF2).

The protein resides in the secreted. The protein localises to the host mitochondrion. Functionally, may play a critical role in the homeostasis of triacylglycerol-containing lipid droplets in M.tuberculosis and influence the entry of the pathogen into a dormant state. Is recognized by host TLR4 receptor at the macrophage cell surface, which modulates the host immune response, induces mitochondrial stress and perturbations, and induces macrophage apoptosis leading to pathogen persistence. Also downregulates NOX-mediated reactive oxygen species (ROS) generation in THP1 macrophages, which increases intracellular survival of bacteria. PPE15 interacts with two subunits of the host NADPH oxidase (NOX) complex in the cytosol of macrophages and prevents their migration to the membrane, which inhibits the assembly of the NOX complex at the plasma membrane of THP1 macrophages. This leads to reduced NOX activity and diminished ROS generation. This Mycobacterium tuberculosis (strain CDC 1551 / Oshkosh) protein is PPE family protein PPE15 (PPE15).